We begin with the raw amino-acid sequence, 864 residues long: 3-O-alpha-D-mannopyranosyl-alpha-D-mannopyranose xylosylphosphotransferase (864 aa).

Positions 1 to 14 (MPPTALPPLRPPAQ) are enriched in pro residues. The interval 1 to 47 (MPPTALPPLRPPAQPYDSYSSSLSPSSPRFHPASAPHGRRAPSPSRL) is disordered. The Cytoplasmic portion of the chain corresponds to 1–81 (MPPTALPPLR…HIRPHLTPRT (81 aa)). Low complexity predominate over residues 15 to 28 (PYDSYSSSLSPSSP). A helical membrane pass occupies residues 82–102 (LTPLLLWTLALWLVHHFLFPF). Topologically, residues 103-864 (SSPLAALSRP…WDPVKDRYHD (762 aa)) are lumenal. Asparagine 199 and asparagine 301 each carry an N-linked (GlcNAc...) asparagine glycan.

This sequence belongs to the XPT1 family. It depends on Mn(2+) as a cofactor.

Its subcellular location is the golgi apparatus membrane. It catalyses the reaction 3-alpha-D-mannopyranosyl-alpha-D-mannopyranose + UDP-alpha-D-xylose = 3-O-(6-O-alpha-D-xylosylphospho-alpha-D-mannopyranosyl)-alpha-D-mannopyranose + UMP + H(+). Xylosylphosphotransferase that is specific for UDP-xylose as a donor and mannose as an acceptor to form a xylose-alpha-1-phosphate-6-mannose linkage. Functions in the O-glycosylation of proteins en route through the secretory pathway. The chain is 3-O-alpha-D-mannopyranosyl-alpha-D-mannopyranose xylosylphosphotransferase (XPT1) from Cryptococcus neoformans var. neoformans serotype D (strain B-3501A) (Filobasidiella neoformans).